The chain runs to 72 residues: UPF0150 protein ssl0738 (72 aa).

The protein belongs to the UPF0150 family.

The protein is UPF0150 protein ssl0738 of Synechocystis sp. (strain ATCC 27184 / PCC 6803 / Kazusa).